We begin with the raw amino-acid sequence, 117 residues long: uncharacterized protein (117 aa).

Residues 1-22 form the signal peptide; that stretch reads MHVKYLAGIVGAALLMAGCSSS.

This is an uncharacterized protein from Escherichia coli O6:H1 (strain CFT073 / ATCC 700928 / UPEC).